Consider the following 985-residue polypeptide: Ephrin type-A receptor 4-B (985 aa).

A signal peptide spans 1-20; the sequence is MAGIVHGILFCGLFGLCWAV. Over 21–547 the chain is Extracellular; the sequence is TGSRIYPASE…MIGEGTSPTV (527 aa). One can recognise an Eph LBD domain in the interval 30–209; it reads EVTLLDSRSV…FYKKCPLTVR (180 aa). Fibronectin type-III domains are found at residues 328-438 and 439-536; these read PPSA…TNQA and APST…TVPS. Residues N340 and N407 are each glycosylated (N-linked (GlcNAc...) asparagine). The chain crosses the membrane as a helical span at residues 548–569; the sequence is LLVSVAGSIVLVVILIAAFVIS. Residues 570–985 lie on the Cytoplasmic side of the membrane; that stretch reads RRRSKYSKAK…QQMQGRMVPV (416 aa). Residues Y595 and Y601 each carry the phosphotyrosine; by autocatalysis modification. Positions 620–881 constitute a Protein kinase domain; that stretch reads IKIEKVIGVG…QIVSMLDKLI (262 aa). Residues 626 to 634 and K652 contribute to the ATP site; that span reads IGVGEFGEV. D745 serves as the catalytic Proton acceptor. A phosphotyrosine; by autocatalysis mark is found at Y778 and Y927. Positions 910–974 constitute an SAM domain; it reads SQVASVLDWL…LSSVQGMRTQ (65 aa). Positions 983–985 match the PDZ-binding motif; sequence VPV.

This sequence belongs to the protein kinase superfamily. Tyr protein kinase family. Ephrin receptor subfamily. As to expression, localized expression in a subset of neural crest and neural tissues in embryos.

It is found in the cell membrane. Its subcellular location is the early endosome. It carries out the reaction L-tyrosyl-[protein] + ATP = O-phospho-L-tyrosyl-[protein] + ADP + H(+). Receptor tyrosine kinase which binds membrane-bound ephrin family ligands residing on adjacent cells, leading to contact-dependent bidirectional signaling into neighboring cells. The signaling pathway downstream of the receptor is referred to as forward signaling while the signaling pathway downstream of the ephrin ligand is referred to as reverse signaling. Highly promiscuous, it has the unique property among Eph receptors to bind and to be physiologically activated by both GPI-anchored ephrin-A and transmembrane ephrin-B ligands including EFNA1 and EFNB3. Upon activation by ephrin ligands, modulates cell morphology and integrin-dependent cell adhesion through regulation of the Rac, Rap and Rho GTPases activity. Plays an important role in the development of the nervous system controlling different steps of axonal guidance including the establishment of the corticospinal projections. The polypeptide is Ephrin type-A receptor 4-B (epha4-b) (Xenopus laevis (African clawed frog)).